The sequence spans 181 residues: ATP synthase subunit delta (181 aa).

The protein belongs to the ATPase delta chain family. In terms of assembly, F-type ATPases have 2 components, F(1) - the catalytic core - and F(0) - the membrane proton channel. F(1) has five subunits: alpha(3), beta(3), gamma(1), delta(1), epsilon(1). F(0) has three main subunits: a(1), b(2) and c(10-14). The alpha and beta chains form an alternating ring which encloses part of the gamma chain. F(1) is attached to F(0) by a central stalk formed by the gamma and epsilon chains, while a peripheral stalk is formed by the delta and b chains.

It is found in the cell membrane. Functionally, f(1)F(0) ATP synthase produces ATP from ADP in the presence of a proton or sodium gradient. F-type ATPases consist of two structural domains, F(1) containing the extramembraneous catalytic core and F(0) containing the membrane proton channel, linked together by a central stalk and a peripheral stalk. During catalysis, ATP synthesis in the catalytic domain of F(1) is coupled via a rotary mechanism of the central stalk subunits to proton translocation. Its function is as follows. This protein is part of the stalk that links CF(0) to CF(1). It either transmits conformational changes from CF(0) to CF(1) or is implicated in proton conduction. The sequence is that of ATP synthase subunit delta from Lacticaseibacillus paracasei (strain ATCC 334 / BCRC 17002 / CCUG 31169 / CIP 107868 / KCTC 3260 / NRRL B-441) (Lactobacillus paracasei).